A 208-amino-acid polypeptide reads, in one-letter code: MVNKRIETLLAQLRQQGIEDERLLTAIEAVPRERFVDEAFEHKAYENTALPIGSGQTISQPYMVAKMTELLNLTPESRVLEIGTGSGYQTAILAHLVQHVCSVERIKGLQWQAKRRLKQLDLHNVSTRHGDGWQGWASRGPFDAIIVTAAPPEIPQALLEQLDEGGVMVLPVGEQSQILQVVQRHAGEFIIKTVEAVRFVPLVKGELA.

S59 is an active-site residue.

It belongs to the methyltransferase superfamily. L-isoaspartyl/D-aspartyl protein methyltransferase family.

The protein localises to the cytoplasm. It catalyses the reaction [protein]-L-isoaspartate + S-adenosyl-L-methionine = [protein]-L-isoaspartate alpha-methyl ester + S-adenosyl-L-homocysteine. Its function is as follows. Catalyzes the methyl esterification of L-isoaspartyl residues in peptides and proteins that result from spontaneous decomposition of normal L-aspartyl and L-asparaginyl residues. It plays a role in the repair and/or degradation of damaged proteins. The chain is Protein-L-isoaspartate O-methyltransferase from Pectobacterium atrosepticum (strain SCRI 1043 / ATCC BAA-672) (Erwinia carotovora subsp. atroseptica).